A 342-amino-acid chain; its full sequence is MSAFTPASEVLLRHSDDFEQSRILFAGDLQDDLPARFECAASRAYTQQFHHWQALSRQMGDNVRFSLVAQASDVADCDTLIYYWPKNKPEAQFQLMNILSLMPVGSDVFVVGENRSGVRSAEPMLADYAPLNKVDSARRCGLYHGRLEKQPQFSLESWWAEYNIDGLTIKTLPGVFSRDGLDVGSQLLLSTLTPHTKGKVLDVGCGAGVLSAALASHSPKVRLTLCDVSAPAVEASRATLAANGLEGEVFASNVFSEVKGRFDMIISNPPFHDGMQTSLDAAQTLIRGAVRHLNSGGELRIVANAFLPYPKILDETFGFHEVIAQTGRFKVYRTVMTRQAKK.

The protein belongs to the methyltransferase superfamily. RsmC family. In terms of assembly, monomer.

The protein resides in the cytoplasm. The catalysed reaction is guanosine(1207) in 16S rRNA + S-adenosyl-L-methionine = N(2)-methylguanosine(1207) in 16S rRNA + S-adenosyl-L-homocysteine + H(+). Specifically methylates the guanine in position 1207 of 16S rRNA in the 30S particle. The protein is Ribosomal RNA small subunit methyltransferase C of Salmonella agona (strain SL483).